Consider the following 147-residue polypeptide: Small ribosomal subunit protein uS12 (147 aa).

The protein belongs to the universal ribosomal protein uS12 family. Part of the 30S ribosomal subunit.

In terms of biological role, with S4 and S5 plays an important role in translational accuracy. Located at the interface of the 30S and 50S subunits. This Thermococcus celer protein is Small ribosomal subunit protein uS12.